A 442-amino-acid polypeptide reads, in one-letter code: Metacaspase-5 (442 aa).

The N-terminal stretch at 1–18 (MDLLLGVLSSGILQNALP) is a signal peptide. Residues 19–62 (FVAGVGRVKRPKRVKLEEAFREAHLCRPVIPYRAPTPYTGGRVK) form an important for catalytic activity region. Residues asparagine 69 and asparagine 112 are each glycosylated (N-linked (GlcNAc...) asparagine). Histidine 146 is a catalytic residue. Ca(2+) is bound by residues aspartate 161, aspartate 177, and aspartate 178. Cysteine 201 is an active-site residue. Aspartate 208 is a Ca(2+) binding site. Residues asparagine 234, asparagine 257, asparagine 282, and asparagine 331 are each glycosylated (N-linked (GlcNAc...) asparagine). Residues 336-442 (HYVPQQYLQP…QYLSGVGKPL (107 aa)) form a negatively regulates catalytic activity region. Positions 348–371 (PPQPYYPPPQPQQPYYPPPQPQQP) are enriched in pro residues. Residues 348 to 442 (PPQPYYPPPQ…QYLSGVGKPL (95 aa)) are disordered. Positions 372–382 (YYPSSQLPTQY) are enriched in low complexity. Residues 422-434 (PSDQSTYYSSAQY) are compositionally biased toward polar residues.

The protein belongs to the peptidase C14B family. In terms of processing, in epimastigotes, the unprocessed enzyme appears to be the main form. Auto-processing is dispensable for catalytic activity towards small oligopeptide substrates.

The protein localises to the recycling endosome. Its activity is regulated as follows. Activated by Ca(2+). Its function is as follows. Cysteine protease that cleaves specifically after arginine or lysine residues. May play a role in apoptosis. The chain is Metacaspase-5 from Trypanosoma cruzi (strain CL Brener).